We begin with the raw amino-acid sequence, 1376 residues long: Spike glycoprotein (1376 aa).

Positions 1–13 (MLFVFILFLPSCL) are cleaved as a signal peptide. At 14 to 1317 (GYIGDFRCIQ…GTYEMYVKWP (1304 aa)) the chain is on the extracellular side. A BetaCoV S1-NTD domain is found at 15–296 (YIGDFRCIQT…SYISEIKCKT (282 aa)). Positions 15–330 (YIGDFRCIQT…RRVPNLPDCK (316 aa)) are receptor binding site. Intrachain disulfides connect Cys21-Cys158, Cys153-Cys187, Cys165-Cys246, Cys284-Cys294, and Cys329-Cys354. Asn31, Asn60, and Asn134 each carry an N-linked (GlcNAc...) asparagine; by host glycan. N-linked (GlcNAc...) asparagine; by host glycosylation occurs at Asn192. One can recognise a BetaCoV S1-CTD domain in the interval 327–618 (PDCKIEEWLT…GINSGTTCST (292 aa)). Asn357 carries N-linked (GlcNAc...) asparagine; by host glycosylation. 2 disulfides stabilise this stretch: Cys372/Cys425 and Cys384/Cys616. N-linked (GlcNAc...) asparagine; by host glycans are attached at residues Asn435, Asn677, Asn709, Asn717, Asn789, and Asn806. Fusion peptide stretches follow at residues 922–943 (SAIE…VEAY) and 941–961 (EAYN…VQSF). Residue Asn945 is glycosylated (N-linked (GlcNAc...) asparagine; by host). A disulfide bond links Cys946 and Cys957. Positions 1022–1072 (QKMIASAFNNALGAIQEGFDATNSALGKIQSVVNANAEALNNLLNQLSNRF) are heptad repeat 1. Residues 1051–1095 (QSVVNANAEALNNLLNQLSNRFGAISASLQEILTRLDRVEAKAQI) adopt a coiled-coil conformation. Asn1232, Asn1242, Asn1261, Asn1277, and Asn1298 each carry an N-linked (GlcNAc...) asparagine; by host glycan. The heptad repeat 2 stretch occupies residues 1266–1306 (APDLSLDFEKLNVTFLDLTYEMNRIQDAIKKLNESYINLKE). Residues 1279-1307 (TFLDLTYEMNRIQDAIKKLNESYINLKEV) are a coiled coil. The helical transmembrane segment at 1318-1338 (WYVWLLIGLAGVAVCVLLFFI) threads the bilayer. Residues 1339–1376 (CCCTGCGSCCFRKCGSCCDEYGGHQDSIVIYNISAHED) are Cytoplasmic-facing. Residues 1372-1376 (SAHED) carry the KxHxx motif.

The protein belongs to the betacoronaviruses spike protein family. As to quaternary structure, homotrimer; each monomer consists of a S1 and a S2 subunit. The resulting peplomers protrude from the virus surface as spikes. Post-translationally, specific enzymatic cleavages in vivo yield mature proteins. The precursor is processed into S1 and S2 by host cell furin or another cellular protease to yield the mature S1 and S2 proteins. Additionally, a second cleavage leads to the release of a fusion peptide after viral attachment to host cell receptor. The cytoplasmic Cys-rich domain is palmitoylated. Spike glycoprotein is digested within host endosomes.

The protein resides in the virion membrane. Its subcellular location is the host endoplasmic reticulum-Golgi intermediate compartment membrane. It localises to the host cell membrane. In terms of biological role, attaches the virion to the cell membrane by interacting with host receptor, initiating the infection. Mediates fusion of the virion and cellular membranes by acting as a class I viral fusion protein. Under the current model, the protein has at least three conformational states: pre-fusion native state, pre-hairpin intermediate state, and post-fusion hairpin state. During viral and target cell membrane fusion, the coiled coil regions (heptad repeats) assume a trimer-of-hairpins structure, positioning the fusion peptide in close proximity to the C-terminal region of the ectodomain. The formation of this structure appears to drive apposition and subsequent fusion of viral and target cell membranes. Its function is as follows. Acts as a viral fusion peptide which is unmasked following S2 cleavage occurring upon virus endocytosis. The polypeptide is Spike glycoprotein (Mus musculus (Mouse)).